The following is a 168-amino-acid chain: G/U mismatch-specific DNA glycosylase (168 aa).

Belongs to the uracil-DNA glycosylase (UDG) superfamily. TDG/mug family. Binds DNA as a monomer.

Its subcellular location is the cytoplasm. The enzyme catalyses Specifically hydrolyzes mismatched double-stranded DNA and polynucleotides, releasing free uracil.. Excises ethenocytosine and uracil, which can arise by alkylation or deamination of cytosine, respectively, from the corresponding mispairs with guanine in ds-DNA. It is capable of hydrolyzing the carbon-nitrogen bond between the sugar-phosphate backbone of the DNA and the mispaired base. The complementary strand guanine functions in substrate recognition. Required for DNA damage lesion repair in stationary-phase cells. The protein is G/U mismatch-specific DNA glycosylase of Escherichia coli O139:H28 (strain E24377A / ETEC).